A 137-amino-acid chain; its full sequence is Small ribosomal subunit protein uS12 (137 aa).

A disordered region spans residues 1 to 20; it reads MPTTNQLVNRGRTSKVQKQN. 3-methylthioaspartic acid is present on D102.

This sequence belongs to the universal ribosomal protein uS12 family. Part of the 30S ribosomal subunit. Contacts proteins S8 and S17. May interact with IF1 in the 30S initiation complex.

Its function is as follows. With S4 and S5 plays an important role in translational accuracy. In terms of biological role, interacts with and stabilizes bases of the 16S rRNA that are involved in tRNA selection in the A site and with the mRNA backbone. Located at the interface of the 30S and 50S subunits, it traverses the body of the 30S subunit contacting proteins on the other side and probably holding the rRNA structure together. The combined cluster of proteins S8, S12 and S17 appears to hold together the shoulder and platform of the 30S subunit. The chain is Small ribosomal subunit protein uS12 from Mycoplasmopsis synoviae (strain 53) (Mycoplasma synoviae).